The sequence spans 78 residues: UPF0369 protein RP167 (78 aa).

Belongs to the SDHAF4 family.

The protein is UPF0369 protein RP167 of Rickettsia prowazekii (strain Madrid E).